Reading from the N-terminus, the 469-residue chain is tRNA-2-methylthio-N(6)-dimethylallyladenosine synthase (469 aa).

In terms of domain architecture, MTTase N-terminal spans 22 to 142; sequence RKVFIKTYGC…LPEALRRAKE (121 aa). Residues C31, C67, C105, C183, C187, and C190 each contribute to the [4Fe-4S] cluster site. In terms of domain architecture, Radical SAM core spans 169-401; the sequence is RARGVTAFLT…QALLLKQQQE (233 aa). The 63-residue stretch at 404-466 folds into the TRAM domain; sequence ESCIGKEIDL…NNSLFAERAE (63 aa).

It belongs to the methylthiotransferase family. MiaB subfamily. Monomer. The cofactor is [4Fe-4S] cluster.

Its subcellular location is the cytoplasm. The enzyme catalyses N(6)-dimethylallyladenosine(37) in tRNA + (sulfur carrier)-SH + AH2 + 2 S-adenosyl-L-methionine = 2-methylsulfanyl-N(6)-dimethylallyladenosine(37) in tRNA + (sulfur carrier)-H + 5'-deoxyadenosine + L-methionine + A + S-adenosyl-L-homocysteine + 2 H(+). Catalyzes the methylthiolation of N6-(dimethylallyl)adenosine (i(6)A), leading to the formation of 2-methylthio-N6-(dimethylallyl)adenosine (ms(2)i(6)A) at position 37 in tRNAs that read codons beginning with uridine. In Rhizobium leguminosarum bv. trifolii (strain WSM2304), this protein is tRNA-2-methylthio-N(6)-dimethylallyladenosine synthase.